Consider the following 160-residue polypeptide: Transcription elongation factor GreB (160 aa).

The protein belongs to the GreA/GreB family. GreB subfamily.

Necessary for efficient RNA polymerase transcription elongation past template-encoded arresting sites. The arresting sites in DNA have the property of trapping a certain fraction of elongating RNA polymerases that pass through, resulting in locked ternary complexes. Cleavage of the nascent transcript by cleavage factors such as GreA or GreB allows the resumption of elongation from the new 3'terminus. GreB releases sequences of up to 9 nucleotides in length. This Vibrio vulnificus (strain CMCP6) protein is Transcription elongation factor GreB.